A 66-amino-acid chain; its full sequence is Potassium channel toxin alpha-KTx (66 aa).

An N-terminal signal peptide occupies residues 1-21 (MNTKVVLIMLMITSVILVVEA). 4 disulfide bridges follow: Cys-29-Cys-49, Cys-35-Cys-59, Cys-39-Cys-61, and Cys-44-Cys-64.

Belongs to the short scorpion toxin superfamily. Potassium channel inhibitor family. Expressed by the venom gland.

The protein localises to the secreted. Blocks voltage-gated potassium channels. The polypeptide is Potassium channel toxin alpha-KTx (Hoffmannihadrurus gertschi (Scorpion)).